A 1118-amino-acid polypeptide reads, in one-letter code: DNA mismatch repair protein MSH1, mitochondrial (1118 aa).

768 to 775 (GPNGGGKS) is a binding site for ATP.

This sequence belongs to the DNA mismatch repair MutS family.

The protein resides in the mitochondrion. It is found in the plastid. Its subcellular location is the chloroplast. Functionally, DNA mismatch repair protein specifically involved in maintenance of mitochondrial genome configuration by controlling specific rearranged portion. Functions by suppressing asymmetric recombination at some repeat pairs. The sequence is that of DNA mismatch repair protein MSH1, mitochondrial (MSH1) from Arabidopsis thaliana (Mouse-ear cress).